Consider the following 726-residue polypeptide: Catalase-peroxidase (726 aa).

Residues 1 to 33 (MSTSDDIHNTTATGKCPFHQGGHDQSAGGGTTT) form a disordered region. The tryptophyl-tyrosyl-methioninium (Trp-Tyr) (with M-252) cross-link spans 105–226 (WHGAGTYRSI…LGATEMGLIY (122 aa)). Residue H106 is the Proton acceptor of the active site. Positions 226-252 (YVNPEGPDHSGEPLSAAAAIRATFGNM) form a cross-link, tryptophyl-tyrosyl-methioninium (Tyr-Met) (with W-105). Position 267 (H267) interacts with heme b.

The protein belongs to the peroxidase family. Peroxidase/catalase subfamily. As to quaternary structure, homodimer or homotetramer. Heme b is required as a cofactor. Post-translationally, formation of the three residue Trp-Tyr-Met cross-link is important for the catalase, but not the peroxidase activity of the enzyme.

The catalysed reaction is H2O2 + AH2 = A + 2 H2O. It carries out the reaction 2 H2O2 = O2 + 2 H2O. In terms of biological role, bifunctional enzyme with both catalase and broad-spectrum peroxidase activity. The protein is Catalase-peroxidase of Escherichia coli (strain UTI89 / UPEC).